A 418-amino-acid chain; its full sequence is Tyrosine--tRNA ligase (418 aa).

L-tyrosine is bound at residue Tyr-34. The 'HIGH' region signature appears at 39-48 (PTADSLHLGH). The L-tyrosine site is built by Tyr-169 and Gln-173. The 'KMSKS' region signature appears at 229–233 (KFGKS). Lys-232 provides a ligand contact to ATP. One can recognise an S4 RNA-binding domain in the interval 352–418 (LNIVDMLVTA…GKKKYAVLTY (67 aa)).

Belongs to the class-I aminoacyl-tRNA synthetase family. TyrS type 1 subfamily. As to quaternary structure, homodimer.

It localises to the cytoplasm. The enzyme catalyses tRNA(Tyr) + L-tyrosine + ATP = L-tyrosyl-tRNA(Tyr) + AMP + diphosphate + H(+). Its function is as follows. Catalyzes the attachment of tyrosine to tRNA(Tyr) in a two-step reaction: tyrosine is first activated by ATP to form Tyr-AMP and then transferred to the acceptor end of tRNA(Tyr). This is Tyrosine--tRNA ligase from Streptococcus equi subsp. zooepidemicus (strain MGCS10565).